We begin with the raw amino-acid sequence, 233 residues long: Transcriptional regulatory protein PrrA (233 aa).

One can recognise a Response regulatory domain in the interval 9-123; the sequence is RVLVVDDDSD…ELVARVKALL (115 aa). Residue D58 is modified to 4-aspartylphosphate. Positions 134 to 232 form a DNA-binding region, ompR/PhoB-type; sequence SETITVGPLE…VRGVGFVLRM (99 aa).

Post-translationally, phosphorylated by PrrB at Asp-58.

It localises to the cytoplasm. Its function is as follows. Member of the two-component regulatory system PrrB/PrrA that is involved specifically in early intracellular multiplication of Mycobacterium and is essential for its viability. Upon phosphorylation by PrrB, functions as a transcription regulator by direct binding to promoter regions of target genes to positively regulate their expression. Autoregulates its own expression. In Mycobacterium bovis (strain ATCC BAA-935 / AF2122/97), this protein is Transcriptional regulatory protein PrrA (prrA).